The chain runs to 346 residues: 3-keto-steroid reductase ERG27 (346 aa).

NADP(+) is bound by residues Leu-19, Thr-42, and Lys-48. Active-site proton donor residues include Ser-182 and Tyr-205. Residues Tyr-205, Lys-209, and Ser-241 each contribute to the NADP(+) site. The active-site Lowers pKa of active site Tyr is the Lys-209. Residues 242 to 262 (FSFFQYLNVFTYYGMLFLFYL) form a helical membrane-spanning segment. Asn-272 is a glycosylation site (N-linked (GlcNAc...) asparagine).

This sequence belongs to the short-chain dehydrogenases/reductases (SDR) family. ERG27 subfamily. Heterotetramer of ERG25, ERG26, ERG27 and ERG28. ERG28 acts as a scaffold to tether ERG27 and other 4,4-demethylation-related enzymes, forming a demethylation enzyme complex, in the endoplasmic reticulum. Interacts with ERG25 and ERG28. Also interacts with ERG7, but only in lipid particles.

It localises to the endoplasmic reticulum membrane. Its subcellular location is the lipid droplet. The enzyme catalyses 3-dehydro-4alpha-methylzymosterol + NADPH + H(+) = 4alpha-methylzymosterol + NADP(+). It functions in the pathway steroid biosynthesis; zymosterol biosynthesis; zymosterol from lanosterol: step 5/6. In terms of biological role, 3-keto-steroid reductase; part of the third module of ergosterol biosynthesis pathway that includes the late steps of the pathway. ERG27 is a catalytic component of the C-4 demethylation complex that catalyzes the reduction of the keto group on the C-3. The third module or late pathway involves the ergosterol synthesis itself through consecutive reactions that mainly occur in the endoplasmic reticulum (ER) membrane. Firstly, the squalene synthase ERG9 catalyzes the condensation of 2 farnesyl pyrophosphate moieties to form squalene, which is the precursor of all steroids. Squalene synthase is crucial for balancing the incorporation of farnesyl diphosphate (FPP) into sterol and nonsterol isoprene synthesis. Secondly, the squalene epoxidase ERG1 catalyzes the stereospecific oxidation of squalene to (S)-2,3-epoxysqualene, which is considered to be a rate-limiting enzyme in steroid biosynthesis. Then, the lanosterol synthase ERG7 catalyzes the cyclization of (S)-2,3 oxidosqualene to lanosterol, a reaction that forms the sterol core. In the next steps, lanosterol is transformed to zymosterol through a complex process involving various demethylation, reduction and desaturation reactions. The lanosterol 14-alpha-demethylase ERG11 (also known as CYP51) catalyzes C14-demethylation of lanosterol to produce 4,4'-dimethyl cholesta-8,14,24-triene-3-beta-ol, which is critical for ergosterol biosynthesis. The C-14 reductase ERG24 reduces the C14=C15 double bond of 4,4-dimethyl-cholesta-8,14,24-trienol to produce 4,4-dimethyl-cholesta-8,24-dienol. 4,4-dimethyl-cholesta-8,24-dienol is substrate of the C-4 demethylation complex ERG25-ERG26-ERG27 in which ERG25 catalyzes the three-step monooxygenation required for the demethylation of 4,4-dimethyl and 4alpha-methylsterols, ERG26 catalyzes the oxidative decarboxylation that results in a reduction of the 3-beta-hydroxy group at the C-3 carbon to an oxo group, and ERG27 is responsible for the reduction of the keto group on the C-3. ERG28 has a role as a scaffold to help anchor ERG25, ERG26 and ERG27 to the endoplasmic reticulum and ERG29 regulates the activity of the iron-containing C4-methylsterol oxidase ERG25. Then, the sterol 24-C-methyltransferase ERG6 catalyzes the methyl transfer from S-adenosyl-methionine to the C-24 of zymosterol to form fecosterol. The C-8 sterol isomerase ERG2 catalyzes the reaction which results in unsaturation at C-7 in the B ring of sterols and thus converts fecosterol to episterol. The sterol-C5-desaturase ERG3 then catalyzes the introduction of a C-5 double bond in the B ring to produce 5-dehydroepisterol. The C-22 sterol desaturase ERG5 further converts 5-dehydroepisterol into ergosta-5,7,22,24(28)-tetraen-3beta-ol by forming the C-22(23) double bond in the sterol side chain. Finally, ergosta-5,7,22,24(28)-tetraen-3beta-ol is substrate of the C-24(28) sterol reductase ERG4 to produce ergosterol. Functionally, facilitates the association of ERG7 with lipid particles preventing its digestion in the endoplasmic reticulum and the lipid particles. This chain is 3-keto-steroid reductase ERG27, found in Candida albicans (Yeast).